Consider the following 267-residue polypeptide: Hydroxyethylthiazole kinase (267 aa).

Met44 is a substrate binding site. ATP contacts are provided by Arg120 and Thr165. Residue Gly192 participates in substrate binding.

Belongs to the Thz kinase family. Mg(2+) serves as cofactor.

The catalysed reaction is 5-(2-hydroxyethyl)-4-methylthiazole + ATP = 4-methyl-5-(2-phosphooxyethyl)-thiazole + ADP + H(+). It participates in cofactor biosynthesis; thiamine diphosphate biosynthesis; 4-methyl-5-(2-phosphoethyl)-thiazole from 5-(2-hydroxyethyl)-4-methylthiazole: step 1/1. In terms of biological role, catalyzes the phosphorylation of the hydroxyl group of 4-methyl-5-beta-hydroxyethylthiazole (THZ). The protein is Hydroxyethylthiazole kinase of Carboxydothermus hydrogenoformans (strain ATCC BAA-161 / DSM 6008 / Z-2901).